The primary structure comprises 338 residues: MKKEFDFILIGRITIDFNPTDYYNNLENSSLFKKYIGGSAANIAIGLSRLKNKVGFFGSVSDDQFGNFVLNVFENEKIDISRIKKTKDHKLGLTFTEMLSEEKSTILMYRDNVADLQIDVSDIDLDYILRTKILVISGTSLAKSPSREAVLKALFLAKNNGIKVVFDIDYRPYSWKNLDEVSLYYQIVAQNSDLIIGSYEEIQLTSRFCLENPENLIDDDYAKYWLKFVDLIIIKNGKKGSKLYQKDKKLVAKIVPVKMLKGYGGGDAYASLFLDHYLKNESDLENGLALATSAASIMVQSHSSFDLPDYQKILEFKDNALKSDPDLVQKKEWNAFKK.

Belongs to the carbohydrate kinase PfkB family.

The enzyme catalyses 5-dehydro-2-deoxy-D-gluconate + ATP = 6-phospho-5-dehydro-2-deoxy-D-gluconate + ADP + H(+). It functions in the pathway polyol metabolism; myo-inositol degradation into acetyl-CoA; acetyl-CoA from myo-inositol: step 5/7. In terms of biological role, catalyzes the phosphorylation of 5-dehydro-2-deoxy-D-gluconate (2-deoxy-5-keto-D-gluconate or DKG) to 6-phospho-5-dehydro-2-deoxy-D-gluconate (DKGP). The chain is 5-dehydro-2-deoxygluconokinase from Mesomycoplasma hyopneumoniae (strain J / ATCC 25934 / NCTC 10110) (Mycoplasma hyopneumoniae).